A 116-amino-acid polypeptide reads, in one-letter code: Large ribosomal subunit protein bL20c (116 aa).

This sequence belongs to the bacterial ribosomal protein bL20 family.

Its subcellular location is the plastid. The protein resides in the chloroplast. Its function is as follows. Binds directly to 23S ribosomal RNA and is necessary for the in vitro assembly process of the 50S ribosomal subunit. It is not involved in the protein synthesizing functions of that subunit. This is Large ribosomal subunit protein bL20c from Oltmannsiellopsis viridis (Marine flagellate).